A 286-amino-acid polypeptide reads, in one-letter code: Transcription factor egl-46 (286 aa).

A C2H2-type 1; atypical zinc finger spans residues C180–C200. 2 consecutive C2H2-type zinc fingers follow at residues Y208 to H230 and V248 to Q271.

Belongs to the INSM1 family. As to quaternary structure, interacts (via C-terminus) with egl-44 (via N-terminus); the interaction is direct; the interaction may regulate transcription. In terms of tissue distribution, expressed in touch cells, HSN cells, ventral cord motor neurons and ciliated ray neurons.

The protein localises to the nucleus. Its function is as follows. Transcription factor. Represses expression of genes involved in differentiation of touch receptor neurons (TRN), probably acting as a heterodimer with egl-44, perhaps by occupying similar cis-regulatory elements as an unc-86/mec-3 heterodimer. Plays a role in cell fate specification of neurons, including the hook neuron HOB, the gas-sensing neuron BAG and touch receptor neurons. Plays a role in neuron differentiation by repressing the expression of zag-1 in FLP neurons, probably acting as a heterodimer with egl-44; because zag-1 represses expression of egl-46 and egl-44, together these proteins form a bistable, negative-feedback loop that regulates the choice between neuronal fates. Acts downstream of egl-44 to prevent touch cell differentiation in FLP neurons. Involved in male mating behavior, acting in concert with egl-44, via modulation of expression of polycystins lov-1 and pkd-2, homeodomain protein ceh-26, and neuropeptide-like protein nlp-8. Modulates the expression of a subset of terminal differentiation genes involved in O(2)- and CO(2)-sensing, acting in parallel to ets-5 and egl-13. May act upstream of RFX transcription factor daf-19 to regulate gene expression specifically in the HOB neuron. Plays a role in specifying commissural dendrites of the PVD nociceptive neurons, acting in concert with egl-44. In association with egl-44, regulates cell cycle exit in the neuronal Q cell lineage. In Caenorhabditis elegans, this protein is Transcription factor egl-46.